The primary structure comprises 295 residues: G1/S-specific cyclin-D1 (295 aa).

A Cyclin N-terminal domain is found at 28–152; sequence LRAMLKAEET…VLVNKLKWNL (125 aa). Positions 264–295 are disordered; sequence QQNLDPKAAEEEEEEEEVDLACTPTDVRDVNI. A Glycyl lysine isopeptide (Lys-Gly) (interchain with G-Cter in ubiquitin) cross-link involves residue lysine 270. A compositionally biased stretch (acidic residues) spans 273 to 282; the sequence is EEEEEEEEVD. A Phosphothreonine modification is found at threonine 286.

This sequence belongs to the cyclin family. Cyclin D subfamily. As to quaternary structure, interacts with either CDK4 or CDK6 protein kinase to form a serine/threonine kinase holoenzyme complex. The cyclin subunit imparts substrate specificity to the complex. Component of the ternary complex CCND1/CDK4/CDKN1B required for nuclear translocation and modulation of CDK4-mediated kinase activity. Interacts directly with CDKN1B. Can form similar complexes with either CDKN1A or CDKN2A. Interacts with UHRF2; the interaction ubiquitinates CCND1 and appears to occur independently of phosphorylation. Interacts with USP2. Interacts (via cyclin N-terminal domain) with INSM1 (via N-terminal region); the interaction competes with the binding of CCND1 to CDK4 during cell cycle progression and inhibits CDK4 activity. Interacts with CDK4; the interaction is prevented with the binding of CCND1 to INSM1 during cell cycle progression. Post-translationally, phosphorylation at Thr-286 by MAP kinases is required for ubiquitination and degradation by the DCX(AMBRA1) complex. It also plays an essential role for recognition by the FBXO31 component of SCF (SKP1-cullin-F-box) protein ligase complex following DNA damage. In terms of processing, ubiquitinated at Lys-270 by the DCX(AMBRA1) complex during the transition from G1 to S cell phase, leading to its degradation: ubiquitination is dependent on Thr-286 phosphorylation. The DCX(AMBRA1) complex represents the major regulator of CCND1 stability during the G1/S transition. Also ubiquitinated by the SCF(FBXO4) and Cul7-RING(FBXW8) ubiquitin-protein ligase complexes. Following DNA damage it is ubiquitinated by the SCF(FBXO31) protein ligase complex. SCF(FBXO31) ubiquitination is dependent on Thr-286 phosphorylation. Ubiquitinated also by UHRF2 apparently in a phosphorylation-independent manner. Ubiquitination leads to its degradation and G1 arrest. Deubiquitinated by USP2; leading to its stabilization.

The protein resides in the nucleus. Its subcellular location is the cytoplasm. It localises to the nucleus membrane. Functionally, regulatory component of the cyclin D1-CDK4 (DC) complex that phosphorylates and inhibits members of the retinoblastoma (RB) protein family including RB1 and regulates the cell-cycle during G(1)/S transition. Phosphorylation of RB1 allows dissociation of the transcription factor E2F from the RB/E2F complex and the subsequent transcription of E2F target genes which are responsible for the progression through the G(1) phase. Hypophosphorylates RB1 in early G(1) phase. Cyclin D-CDK4 complexes are major integrators of various mitogenenic and antimitogenic signals. Also a substrate for SMAD3, phosphorylating SMAD3 in a cell-cycle-dependent manner and repressing its transcriptional activity. Component of the ternary complex, cyclin D1/CDK4/CDKN1B, required for nuclear translocation and activity of the cyclin D-CDK4 complex. Exhibits transcriptional corepressor activity with INSM1 on the NEUROD1 and INS promoters in a cell cycle-independent manner. The chain is G1/S-specific cyclin-D1 (CCND1) from Bos taurus (Bovine).